We begin with the raw amino-acid sequence, 270 residues long: Tryptophan synthase alpha chain (270 aa).

Residues Glu49 and Asp60 each act as proton acceptor in the active site.

The protein belongs to the TrpA family. As to quaternary structure, tetramer of two alpha and two beta chains.

The catalysed reaction is (1S,2R)-1-C-(indol-3-yl)glycerol 3-phosphate + L-serine = D-glyceraldehyde 3-phosphate + L-tryptophan + H2O. The protein operates within amino-acid biosynthesis; L-tryptophan biosynthesis; L-tryptophan from chorismate: step 5/5. In terms of biological role, the alpha subunit is responsible for the aldol cleavage of indoleglycerol phosphate to indole and glyceraldehyde 3-phosphate. This chain is Tryptophan synthase alpha chain, found in Pseudomonas fluorescens (strain ATCC BAA-477 / NRRL B-23932 / Pf-5).